A 485-amino-acid polypeptide reads, in one-letter code: tRNA sulfurtransferase (485 aa).

The region spanning 61-165 (EELIALLQRI…DDKMMLVKAR (105 aa)) is the THUMP domain. Residues 183-184 (LI), K265, G287, and Q296 each bind ATP. A disulfide bridge connects residues C344 and C456. The 80-residue stretch at 404-483 (LSENEVILDI…FSNVRVFAKK (80 aa)) folds into the Rhodanese domain. Residue C456 is the Cysteine persulfide intermediate of the active site.

Belongs to the ThiI family.

Its subcellular location is the cytoplasm. The enzyme catalyses [ThiI sulfur-carrier protein]-S-sulfanyl-L-cysteine + a uridine in tRNA + 2 reduced [2Fe-2S]-[ferredoxin] + ATP + H(+) = [ThiI sulfur-carrier protein]-L-cysteine + a 4-thiouridine in tRNA + 2 oxidized [2Fe-2S]-[ferredoxin] + AMP + diphosphate. It catalyses the reaction [ThiS sulfur-carrier protein]-C-terminal Gly-Gly-AMP + S-sulfanyl-L-cysteinyl-[cysteine desulfurase] + AH2 = [ThiS sulfur-carrier protein]-C-terminal-Gly-aminoethanethioate + L-cysteinyl-[cysteine desulfurase] + A + AMP + 2 H(+). It participates in cofactor biosynthesis; thiamine diphosphate biosynthesis. Its function is as follows. Catalyzes the ATP-dependent transfer of a sulfur to tRNA to produce 4-thiouridine in position 8 of tRNAs, which functions as a near-UV photosensor. Also catalyzes the transfer of sulfur to the sulfur carrier protein ThiS, forming ThiS-thiocarboxylate. This is a step in the synthesis of thiazole, in the thiamine biosynthesis pathway. The sulfur is donated as persulfide by IscS. The sequence is that of tRNA sulfurtransferase from Haemophilus influenzae (strain PittEE).